Here is a 739-residue protein sequence, read N- to C-terminus: Polyribonucleotide nucleotidyltransferase (739 aa).

Asp514 and Asp520 together coordinate Mg(2+). The KH domain maps to 580–639 (PRIITVKIPVDKIGEVIGPKGKMINQIQEDTGADITIEDDGTIYIGAAQGSQAEAARATI). The S1 motif domain occupies 651–723 (GERYLGTVVK…SRGKLSLIPV (73 aa)).

The protein belongs to the polyribonucleotide nucleotidyltransferase family. Requires Mg(2+) as cofactor.

The protein resides in the cytoplasm. The catalysed reaction is RNA(n+1) + phosphate = RNA(n) + a ribonucleoside 5'-diphosphate. Involved in mRNA degradation. Catalyzes the phosphorolysis of single-stranded polyribonucleotides processively in the 3'- to 5'-direction. The chain is Polyribonucleotide nucleotidyltransferase from Streptomyces coelicolor (strain ATCC BAA-471 / A3(2) / M145).